Reading from the N-terminus, the 360-residue chain is C-C chemokine receptor type 4 (360 aa).

The Extracellular segment spans residues Met1–Glu39. Residues Leu40–Tyr67 form a helical membrane-spanning segment. Residues Lys68–Tyr77 lie on the Cytoplasmic side of the membrane. Residues Leu78–Tyr98 form a helical membrane-spanning segment. Residues Ala99 to Lys111 are Extracellular-facing. A disulfide bridge links Cys110 with Cys187. A helical transmembrane segment spans residues Met112–Ile133. At Asp134–Thr150 the chain is on the cytoplasmic side. The chain crosses the membrane as a helical span at residues Leu151–Phe175. The Extracellular portion of the chain corresponds to Ser176–Ile206. Residues Asn183 and Asn194 are each glycosylated (N-linked (GlcNAc...) asparagine). A helical transmembrane segment spans residues Asn207–Ile226. Topologically, residues Arg227–Lys242 are cytoplasmic. The helical transmembrane segment at Met243 to Leu267 threads the bilayer. The Extracellular segment spans residues Val268 to Tyr284. Residues Ala285–Gly308 form a helical membrane-spanning segment. Over Glu309–Leu360 the chain is Cytoplasmic.

It belongs to the G-protein coupled receptor 1 family. In natural killer cells, CCL22 binding induces phosphorylation on yet undefined Ser/Thr residues, most probably by beta-adrenergic receptor kinases 1 and 2. Predominantly expressed in the thymus, in peripheral blood leukocytes, including T-cells, mostly CD4+ cells, and basophils, and in platelets; at lower levels, in the spleen and in monocytes. Detected also in macrophages, IL-2-activated natural killer cells and skin-homing memory T-cells, mostly the ones expressing the cutaneous lymphocyte antigen (CLA). Expressed in brain microvascular and coronary artery endothelial cells.

Its subcellular location is the cell membrane. Its function is as follows. High affinity receptor for the C-C type chemokines CCL17/TARC, CCL22/MDC and CKLF isoform 1/CKLF1. The activity of this receptor is mediated by G(i) proteins which activate a phosphatidylinositol-calcium second messenger system. Can function as a chemoattractant homing receptor on circulating memory lymphocytes and as a coreceptor for some primary HIV-2 isolates. In the CNS, could mediate hippocampal-neuron survival. In Homo sapiens (Human), this protein is C-C chemokine receptor type 4 (CCR4).